A 413-amino-acid polypeptide reads, in one-letter code: Cyclic AMP-dependent transcription factor ATF-7 (413 aa).

The segment at 1 to 285 is transactivation domain; the sequence is MGDDRPFVCS…GMVVGTASTM (285 aa). The C2H2-type zinc-finger motif lies at 7–31; the sequence is FVCSAPGCGQRFTNEDHLAVHKHKH. Thr-51 is subject to Phosphothreonine; by MAPK11. Thr-53 and Thr-101 each carry phosphothreonine. Disordered stretches follow at residues 81–140 and 299–337; these read ASDD…TTKP and HPDA…RRQR. Residue Lys-107 forms a Glycyl lysine isopeptide (Lys-Gly) (interchain with G-Cter in SUMO1) linkage. 2 stretches are compositionally biased toward low complexity: residues 114–126 and 307–320; these read VDSS…ASSP and QPQV…PSTG. Residues 326-337 are compositionally biased toward basic and acidic residues; it reads TVDEDPDERRQR. Residues 332–395 form the bZIP domain; it reads DERRQRFLER…AQLKQLLLAH (64 aa). The basic motif stretch occupies residues 334 to 354; it reads RRQRFLERNRAAASRCRQKRK. The segment at 360–388 is leucine-zipper; that stretch reads LEKKAEELTSQNIQLSNEVTLLRNEVAQL.

Belongs to the bZIP family. Homodimer; binds DNA as homodimer. Heterodimer; heterodimerizes with other members of ATF family and with JUN family members. Interacts with JNK2; the interaction does not phosphorylate ATF7 but acts as a docking site for other ATF-associated partners such as JUN family members. Interacts (via its transactivation domain) with TAF12 the interaction potentiates the transactivation activity and is inhibited by ATF7 sumoylation. Interacts with TAF4; the interaction inhibits the TAF12-dependent transactivation. Interacts with MAPK9; the interaction does not phosphorylate ATF7 but acts as a docking site for ATF7-associated partners such as JUN. Interacts with Ku complex components XRCC6 and XRCC7. Interacts with TERT. On EGF stimulation, phosphorylated first on Thr-53 allowing subsequent phosphorylation on Thr-51. This latter phosphorylation prevents sumoylation, increases binding to TAF12 and enhances transcriptional activity. Social isolation stress as well as TNF-alpha also induce the phosphorylation of ATF7. Phosphorylated in proliferating colonic and small intestinal epithelial cells. Post-translationally, sumoylation delays nuclear localization and inhibits transactivation activity through preventing binding to TAF12. RANBP2 appears to be the specific E3 ligase.

Its subcellular location is the nucleus. It localises to the nucleoplasm. It is found in the chromosome. The protein resides in the telomere. Functionally, stress-responsive chromatin regulator that plays a role in various biological processes including innate immunological memory, adipocyte differentiation or telomerase regulation. In absence of stress, contributes to the formation of heterochromatin and heterochromatin-like structure by recruiting histone H3K9 tri- and di-methyltransferases thus silencing the transcription of target genes such as Htr5b, STAT1 in adipocytes, or genes involved in innate immunity in macrophages and adipocytes. Phosphorylation of ATF7 disrupts interactions with histone methyltransferase and enhances the association with coactivators containing histone acetyltransferase and/or histone demethylase, leading to disruption of the heterochromatin-like structure and subsequently transcriptional activation. In response to TNF-alpha, which is induced by various stresses, phosphorylated ATF7 and telomerase are released from telomeres leading to telomere shortening. Also plays a role in maintaining epithelial regenerative capacity and protecting against cell death during intestinal epithelial damage and repair. This Mus musculus (Mouse) protein is Cyclic AMP-dependent transcription factor ATF-7 (Atf7).